A 382-amino-acid polypeptide reads, in one-letter code: GDP-mannose-dependent alpha-(1-6)-phosphatidylinositol monomannoside mannosyltransferase (382 aa).

4 residues coordinate GDP-alpha-D-mannose: R200, K205, I257, and E294.

This sequence belongs to the glycosyltransferase group 1 family. Glycosyltransferase 4 subfamily.

The enzyme catalyses a 1,2-diacyl-sn-glycero-3-phospho-[alpha-D-mannopyranosyl-(1&lt;-&gt;6)-D-myo-inositol] + GDP-alpha-D-mannose = a 2,6-O-bis(alpha-D-mannopyranosyl)-1-phosphatidyl-1D-myo-inositol + GDP + H(+). The catalysed reaction is a 1,2-diacyl-sn-glycero-3-phospho-[alpha-D-6-acyl-mannopyranosyl-(1&lt;-&gt;6)-D-myo-inositol] + GDP-alpha-D-mannose = a 2-O-(alpha-D-mannosyl)-6-O-(6-O-acyl-alpha-D-mannosyl)-1-phosphatidyl-1D-myo-inositol + GDP + H(+). Its pathway is phospholipid metabolism; phosphatidylinositol metabolism. Involved in the biosynthesis of phosphatidyl-myo-inositol mannosides (PIM) which are early precursors in the biosynthesis of lipomannans (LM) and lipoarabinomannans (LAM). Catalyzes the addition of a mannosyl residue from GDP-D-mannose (GDP-Man) to the position 6 of a phosphatidyl-myo-inositol bearing an alpha-1,2-linked mannose residue (PIM1) to generate phosphatidyl-myo-inositol bearing alpha-1,2- and alpha-1,6-linked mannose residues (Ac1PIM2). PimB also catalyzes the addition of a mannosyl residue from GDP-Man to the position 6 of phosphatidyl-myo-inositol bearing an acylated alpha-1,2-linked mannose residue (Ac1PIM1) to generate monoacylated phosphatidyl-myo-inositol bearing alpha-1,2- and alpha-1,6-linked mannose residues (Ac1PIM2). The addition of the second mannosyl residue by PimB preferentially occurs before the acylation of the mannosyl residue transferred by PimA. Also able to transfer a mannosyl residue from GDP-Man to the position 6 of a phosphatidyl-myo-inositol (PI), but this reaction is very slow. The chain is GDP-mannose-dependent alpha-(1-6)-phosphatidylinositol monomannoside mannosyltransferase from Mycolicibacterium smegmatis (strain ATCC 700084 / mc(2)155) (Mycobacterium smegmatis).